A 1502-amino-acid polypeptide reads, in one-letter code: MKPEPRTLPPSPNWYCSRCSDAAPGGIFGFAARTSVFLVRVGPGAGASPGAPPFRVVGELVGHTERVSGFTFSHHPGQYNLCATSSDDGTVKVWDVETKTVVTEHTLHQHTISALHWSPTVKDLIVSGDEKGVVFCYWLNRNDSQHLFTEPRTIFCLTCSPHHENLVAIGYKDGIVVIIDISKKGEVIHRLRGHDDEIHSIAWCPLSGEDCLSISQEENSEEPDIPNGKLIAETPITKGCYLATGSKDQTIRIWSCSRGRGVMVLKLPFLKRRSGGVDPTVKERLWLTLHWPKNQPTQLVSSCFGGELLLWDLTQSWRRKYTLFSTSAEGHNHSRIVFNLCSLKTEDGKQLLLSTSMDRDVKCWDMATLECCWTLPSLGGFAYSLAFSPVDVGSLAIGVGDGMIRVWNTLSIKNNYDVKNFWQGVKSKVTALCWHPNKEGCLAFGTDDGKVGLYDTCSNKPPQISSTYHKKTVYRLAWGPPVPPMSLGGEGDRPSLTLYSCGGEGVVLQHNPWKLSGEAFDINKLVRDTNSIRYKLPVHTEISWKGDGKVLALGNEDGSIEIFQVPNLRLLCTIQQHHKLVNAIVWHHEHGSRPELSCLLASGSNNAVIYVHNLKAVLESNPESPITITEPYRTLSGHTAKITSLAWSPHHDGRLVSACYDGTAQVWDALREEPLFNFRGHRGRLLCVAWSPVDPECIYSGADDFCVYRWLTSMQDHSRPPQGKKCIELEKKRLSQFKPKLKKKKKPTLRLPVKQDSSVGNEDESVKENSGPAENGLSDQDGEEEAQEPELPPSPVVCVEPVSCTDICSGFEKSKVTVSSKATSLKKEPAKEKPEALLKKRKARSMLPLSTSLDHRSKEELHRDCLVLATATHAKAELNEDVSADLEERFHLGLFTDRATLYRMMETEGKGHLESGHPELFHQLMLWKGDLKGVLQAAAERGELTDSLVAVAPVAGYSVWLWAVEAFAKQLCFQDQYVKAASYLLSIHKVYEAVELLKSNHLYREAIAVAKARLRPEDPVLKELYLSWGSILERDGHYAIAAKCYLGATSAYDAAKVLARKGDAASLRTAAELAAIAGEHELAASLALRCAQELLLMKNWVGAQEALGLHESLQGQRLVFCLLELLCRHLEEKQPLEVRGPSSIYHQWATGSEGTLVQRVTGVWRSAFSVDTPEQCQAALQKLQDVKYPSATSNTPFRQLLLHVCHDLTLAMLSQQAAAWEEAVPALLQAVVRSYTSGNFTLMQEIYSAFLPGGCDHLRDKLGDLSPAMAAYKSLEAFCIYGQLYEVWWSLCGPGPESSVWVLSAESTVSDKQSKPEDSASAEDMEQPPGPGPRLSAESERLLSACKELFSERHASLQTSQRTVAEVQETLAEMIRQHQKSQLCKATTNGPSRDEPSRDEPSQEAERAPSQPPSPTEERNAPVSLPELTRRLTEANERIAEFPESVKAWPFPDVLECCLVLLHIGSQCPDAVDPEMQQQAQELLHKYGHTRAYRRHCQSRHT.

Residues 1–124 (MKPEPRTLPP…LHWSPTVKDL (124 aa)) form an important for interaction with U1 snRNA region. Residues 13 to 15 (NWY) form an interaction with U4 snRNA region. At Ser48 the chain carries Phosphoserine. WD repeat units lie at residues 62 to 104 (GHTE…VVTE), 107 to 148 (LHQH…QHLF), 150 to 189 (EPRT…EVIH), 193 to 264 (GHDD…GVMV), 280 to 321 (TVKE…RRKY), 333 to 374 (HSRI…CCWT), 377 to 417 (SLGG…NNYD), 424 to 464 (GVKS…PPQI), 468 to 509 (YHKK…VVLQ), 533 to 573 (RYKL…LLCT), and 576 to 622 (QHHK…ESNP). Ser624 is modified (phosphoserine). WD repeat units lie at residues 637–677 (GHTA…PLFN) and 680–720 (GHRG…HSRP). Disordered stretches follow at residues 740-797 (KLKK…SPVV) and 819-838 (SSKA…EALL). Lys754 participates in a covalent cross-link: Glycyl lysine isopeptide (Lys-Gly) (interchain with G-Cter in SUMO2). 3 positions are modified to phosphoserine: Ser757, Ser770, and Ser778. Over residues 825-838 (LKKEPAKEKPEALL) the composition is skewed to basic and acidic residues. The residue at position 845 (Ser845) is a Phosphoserine. Disordered regions lie at residues 1309–1338 (VSDK…LSAE) and 1378–1427 (HQKS…SLPE). A coiled-coil region spans residues 1355–1382 (ASLQTSQRTVAEVQETLAEMIRQHQKSQ). Residues 1380-1391 (KSQLCKATTNGP) are compositionally biased toward polar residues. A compositionally biased stretch (basic and acidic residues) spans 1392–1407 (SRDEPSRDEPSQEAER).

The protein belongs to the WD repeat gemin-5 family. In terms of assembly, part of the core SMN complex that contains SMN1, GEMIN2/SIP1, DDX20/GEMIN3, GEMIN4, GEMIN5, GEMIN6, GEMIN7, GEMIN8 and STRAP/UNRIP. Part of the SMN-Sm complex that contains SMN1, GEMIN2/SIP1, DDX20/GEMIN3, GEMIN4, GEMIN5, GEMIN6, GEMIN7, GEMIN8, STRAP/UNRIP and the Sm proteins SNRPB, SNRPD1, SNRPD2, SNRPD3, SNRPE, SNRPF and SNRPG. Interacts directly with SMN1, SNRPB, SNRPD1, SNRPD2, SNRPD3 and SNRPE. Identified in a SMN complex that contains GEMIN2/SIP1. Interacts with cytosolic DDX20/GEMIN3 and GEMIN4. Interacts with SNRNP70 and HNRNPU. Identified in a complex with 80S ribosomes; binds to the 60S large ribosomal subunit. Interacts with the ribosomal subunits RPL3 and RPL4.

Its subcellular location is the nucleus. The protein localises to the nucleoplasm. It is found in the gem. It localises to the cytoplasm. In terms of biological role, the SMN complex catalyzes the assembly of small nuclear ribonucleoproteins (snRNPs), the building blocks of the spliceosome, and thereby plays an important role in the splicing of cellular pre-mRNAs. Most spliceosomal snRNPs contain a common set of Sm proteins SNRPB, SNRPD1, SNRPD2, SNRPD3, SNRPE, SNRPF and SNRPG that assemble in a heptameric protein ring on the Sm site of the small nuclear RNA to form the core snRNP (Sm core). In the cytosol, the Sm proteins SNRPD1, SNRPD2, SNRPE, SNRPF and SNRPG are trapped in an inactive 6S pICln-Sm complex by the chaperone CLNS1A that controls the assembly of the core snRNP. To assemble core snRNPs, the SMN complex accepts the trapped 5Sm proteins from CLNS1A forming an intermediate. Binding of snRNA inside 5Sm ultimately triggers eviction of the SMN complex, thereby allowing binding of SNRPD3 and SNRPB to complete assembly of the core snRNP. Within the SMN complex, GEMIN5 recognizes and delivers the small nuclear RNAs (snRNAs) to the SMN complex. Binds to the 7-methylguanosine cap of RNA molecules. Binds to the 3'-UTR of SMN1 mRNA and regulates its translation; does not affect mRNA stability. May play a role in the regulation of protein synthesis via its interaction with ribosomes. The protein is Gem-associated protein 5 (Gemin5) of Mus musculus (Mouse).